The chain runs to 591 residues: L-fucose isomerase (591 aa).

Residues Glu-337 and Asp-361 each act as proton acceptor in the active site. Mn(2+) contacts are provided by Glu-337, Asp-361, and His-528.

It belongs to the L-fucose isomerase family. In terms of assembly, homohexamer. Requires Mn(2+) as cofactor.

The protein resides in the cytoplasm. The catalysed reaction is L-fucose = L-fuculose. It functions in the pathway carbohydrate degradation; L-fucose degradation; L-lactaldehyde and glycerone phosphate from L-fucose: step 1/3. Its function is as follows. Converts the aldose L-fucose into the corresponding ketose L-fuculose. The chain is L-fucose isomerase from Escherichia coli O6:K15:H31 (strain 536 / UPEC).